The following is a 154-amino-acid chain: Fimbrial protein (154 aa).

A propeptide spans 1 to 6 (MKAQKG) (leader sequence). Phe-7 carries the N-methylphenylalanine modification. Residues 7-27 (FTLIELMIVVAIIGILAAIAI) traverse the membrane as a helical segment. An intrachain disulfide couples Cys-133 to Cys-151. Residue Ser-154 is glycosylated (O-linked (FucNAc...) serine).

This sequence belongs to the N-Me-Phe pilin family. As to quaternary structure, the pili are polar flexible filaments of about 5.4 nanometers diameter and 2.5 micrometers average length; they consist of only a single polypeptide chain arranged in a helical configuration of five subunits per turn in the assembled pilus. In terms of processing, O-glycosylated; glycan consists of 5NbetaOHC47NFmPse(alpha2-4)Xyl(beta1-3)FucNAc in beta1-O linkage to Ser.

The protein resides in the fimbrium. Its subcellular location is the membrane. This chain is Fimbrial protein (pilA), found in Pseudomonas aeruginosa.